A 329-amino-acid polypeptide reads, in one-letter code: Alpha/beta hydrolase domain-containing protein 17C (329 aa).

Residues 53-79 (GASAPAPAQATAAAAAAQPAPQQPEEG) show a composition bias toward low complexity. Residues 53–85 (GASAPAPAQATAAAAAAQPAPQQPEEGAGAGPG) form a disordered region. Active-site charge relay system residues include Ser-211, Asp-276, and His-305.

It belongs to the AB hydrolase superfamily. ABHD17 family. Post-translationally, palmitoylated on cysteine residues located in a cysteine cluster at the N-terminus which promotes membrane localization. Palmitoylation is required for post-synaptic localization and for depalmitoylating activity towards DLG4/PSD95.

It is found in the recycling endosome membrane. The protein localises to the cell projection. It localises to the dendritic spine. The protein resides in the postsynaptic density membrane. It carries out the reaction S-hexadecanoyl-L-cysteinyl-[protein] + H2O = L-cysteinyl-[protein] + hexadecanoate + H(+). With respect to regulation, inhibited by palmostatin-B. Its function is as follows. Hydrolyzes fatty acids from S-acylated cysteine residues in proteins. Has depalmitoylating activity towards NRAS and DLG4/PSD95. The polypeptide is Alpha/beta hydrolase domain-containing protein 17C (Homo sapiens (Human)).